A 538-amino-acid chain; its full sequence is Ribosome-associated complex subunit SSZ1 (538 aa).

Positions 400–538 (PVIVNTPHLK…KTGNAVKGEL (139 aa)) are peptide-binding domain. Residues 464-484 (PIPKEENAEEDDESEWSDDEP) form a disordered region. Residues 470 to 484 (NAEEDDESEWSDDEP) show a composition bias toward acidic residues. 2 positions are modified to phosphoserine: Ser-477 and Ser-480.

Belongs to the heat shock protein 70 family. In terms of assembly, RAC is a heterodimer of the Hsp70/DnaK-type chaperone SSZ1 and the Hsp40/DnaJ-type chaperone ZUO1. RAC associates with ribosomes via ZUO1.

It localises to the cytoplasm. Its function is as follows. Component of the ribosome-associated complex (RAC), a heterodimeric chaperone complex involved in regulation of accurate translation termination and in folding or maintaining nascent polypeptides in a folding-competent state. RAC stimulates the ATPase activity of the ribosome-associated pool of Hsp70-type chaperones SSB1/SSB2 that bind to the nascent polypeptide chain. SSZ1 is required for ZUO1 to function efficiently as a J-protein for SSB1/SSB2. Also involved in pleiotropic drug resistance by post-translational activation of transcription factor PDR1. In Saccharomyces cerevisiae (strain ATCC 204508 / S288c) (Baker's yeast), this protein is Ribosome-associated complex subunit SSZ1 (SSZ1).